A 288-amino-acid polypeptide reads, in one-letter code: Energy-coupling factor transporter ATP-binding protein EcfA2 (288 aa).

The 244-residue stretch at 3–246 (IKLEQLGYCY…PDALVDLGLS (244 aa)) folds into the ABC transporter domain. Residue 40–47 (GHTGSGKS) participates in ATP binding.

Belongs to the ABC transporter superfamily. Energy-coupling factor EcfA family. As to quaternary structure, forms a stable energy-coupling factor (ECF) transporter complex composed of 2 membrane-embedded substrate-binding proteins (S component), 2 ATP-binding proteins (A component) and 2 transmembrane proteins (T component).

It localises to the cell membrane. Functionally, ATP-binding (A) component of a common energy-coupling factor (ECF) ABC-transporter complex. Unlike classic ABC transporters this ECF transporter provides the energy necessary to transport a number of different substrates. This Listeria welshimeri serovar 6b (strain ATCC 35897 / DSM 20650 / CCUG 15529 / CIP 8149 / NCTC 11857 / SLCC 5334 / V8) protein is Energy-coupling factor transporter ATP-binding protein EcfA2.